Here is a 601-residue protein sequence, read N- to C-terminus: Pyranose 2-oxidase (601 aa).

His-151 carries the tele-8alpha-FAD histidine modification. The substrate site is built by Gln-406 and His-408. The active-site Proton acceptor is His-505. The active site involves Asn-558. Residues 577–601 form a disordered region; it reads KLGKKGSHSGNRDDGDVDTDTDDDA. The segment covering 591–601 has biased composition (acidic residues); sequence GDVDTDTDDDA.

This sequence belongs to the GMC oxidoreductase family. As to quaternary structure, homotetramer. Requires FAD as cofactor.

The catalysed reaction is D-glucose + O2 = 2-dehydro-D-glucose + H2O2. In terms of biological role, catalyzes the oxidation of various aldopyranoses and disaccharides on carbon-2 to the corresponding 2-keto sugars concomitant with the reduction of O(2) to H(2)O(2). This is Pyranose 2-oxidase (p2ox) from Emericella nidulans (strain FGSC A4 / ATCC 38163 / CBS 112.46 / NRRL 194 / M139) (Aspergillus nidulans).